The chain runs to 780 residues: ATP-dependent 6-phosphofructokinase, liver type (780 aa).

Position 2 is an N-acetylalanine (A2). An N-terminal catalytic PFK domain 1 region spans residues 2 to 390; sequence AAVDLEKLRA…NWNIYKLLAH (389 aa). ATP is bound by residues G25, 88–89, and 118–121; these read RC and GDGS. D119 serves as a coordination point for Mg(2+). Residues 164-166, R201, 208-210, E264, R292, and 298-301 contribute to the substrate site; these read SID, MGR, and HVQR. The Proton acceptor role is filled by D166. The residue at position 377 (S377) is a Phosphoserine. Positions 391–400 are interdomain linker; that stretch reads QKPPKEKSNF. A C-terminal regulatory PFK domain 2 region spans residues 401–780; sequence SLAILNVGAP…RRTLSMDKGF (380 aa). Beta-D-fructose 2,6-bisphosphate-binding positions include R470, 527-531, R565, 572-574, and E628; these read TISNN and MGG. The O-linked (GlcNAc) serine glycan is linked to S529. A Phosphotyrosine modification is found at Y640. Beta-D-fructose 2,6-bisphosphate contacts are provided by residues R654, 660-663, and R734; that span reads HLQQ. S775 is modified (phosphoserine).

It belongs to the phosphofructokinase type A (PFKA) family. ATP-dependent PFK group I subfamily. Eukaryotic two domain clade 'E' sub-subfamily. In terms of assembly, homo- and heterotetramers. Phosphofructokinase (PFK) enzyme functions as a tetramer composed of different combinations of 3 types of subunits, called PFKM (where M stands for Muscle), PFKL (Liver) and PFKP (Platelet). The composition of the PFK tetramer differs according to the tissue type it is present in. In muscles, it is composed of 4 PFKM subunits (also called M4). In the liver, the predominant form is a tetramer of PFKL subunits (L4). In erythrocytes, both PFKM and PFKL subunits randomly tetramerize to form M4, L4 and other combinations (ML3, M2L2, M3L). The kinetic and regulatory properties of the tetrameric enzyme are dependent on the subunit composition, hence can vary across tissues. Requires Mg(2+) as cofactor. Post-translationally, glcNAcylation at Ser-529 by OGT decreases enzyme activity, leading to redirect glucose flux through the oxidative pentose phosphate pathway. Glycosylation is stimulated by both hypoxia and glucose deprivation.

The protein resides in the cytoplasm. The enzyme catalyses beta-D-fructose 6-phosphate + ATP = beta-D-fructose 1,6-bisphosphate + ADP + H(+). It functions in the pathway carbohydrate degradation; glycolysis; D-glyceraldehyde 3-phosphate and glycerone phosphate from D-glucose: step 3/4. Its activity is regulated as follows. Allosterically activated by ADP, AMP, or fructose 2,6-bisphosphate, and allosterically inhibited by ATP or citrate. GlcNAcylation by OGT overcomes allosteric regulation. Catalyzes the phosphorylation of D-fructose 6-phosphate to fructose 1,6-bisphosphate by ATP, the first committing step of glycolysis. Negatively regulates the phagocyte oxidative burst in response to bacterial infection by controlling cellular NADPH biosynthesis and NADPH oxidase-derived reactive oxygen species. Upon macrophage activation, drives the metabolic switch toward glycolysis, thus preventing glucose turnover that produces NADPH via pentose phosphate pathway. The protein is ATP-dependent 6-phosphofructokinase, liver type of Homo sapiens (Human).